Consider the following 187-residue polypeptide: Cerebral dopamine neurotrophic factor (187 aa).

The first 24 residues, 1 to 24 (MRCISPTALVTFCAGFCISNPVLA), serve as a signal peptide directing secretion. 3 cysteine pairs are disulfide-bonded: Cys37–Cys124, Cys40–Cys113, and Cys71–Cys82.

It belongs to the ARMET family. In terms of tissue distribution, expressed at high levels in the heart, skeletal muscle, testis and brain (at protein level). In the brain, detected in the cerebral cortex neurons through layers II to VI. In the hippocampus, detected in the CA1 to CA3 pyramidal regions and in the granule and polymorph layers of dentate gyrus. Weak expression in the striatum. In substantia nigra, detected in solitary cells that did not express tyrosine hydroxylase, a marker for dopaminergic neurons. Relatively high expression in the Purkinje cells of the cerebellum and in regions of the brain stem, including the locus coeruleus.

Its subcellular location is the secreted. In terms of biological role, trophic factor for dopamine neurons. Prevents the 6-hydroxydopamine (6-OHDA)-induced degeneration of dopaminergic neurons. When administered after 6-OHDA-lesioning, restores the dopaminergic function and prevents the degeneration of dopaminergic neurons in substantia nigra. This Mus musculus (Mouse) protein is Cerebral dopamine neurotrophic factor (Cdnf).